The primary structure comprises 633 residues: Uracil permease (633 aa).

A run of 12 helical transmembrane segments spans residues 143–163 (WWQCWITIWIGYGFVGAFVVL), 173–193 (LSFPISSRASFGIFFSLWPVI), 197–217 (VMAIVWYSVQAYIAATPVSLM), 242–262 (YEFMCFFIFWAASLPFLLVPP), 268–288 (LFTVKAVLVPFASFGFLIWAI), 310–330 (FSWAFLRSLMGCMANFSTMVI), 350–370 (LVCIPFLFSITCLIGILVTAA), 400–420 (AGVFLISFVFAVAQLGTNISA), 442–462 (GSLFCAAMALCICPWNLMATS), 465–485 (FTMALSAYAIFLSSIAGVVCS), 521–541 (ALAAYLCGVAPCLPGFIAEVG), and 559–579 (YWVGYGLSFSSYTALCYFFPV).

It belongs to the purine-cytosine permease (2.A.39) family. Post-translationally, glycosylated (possible); but there is not yet direct biochemical evidence for it.

It localises to the membrane. Transport of uracil. The sequence is that of Uracil permease (FUR4) from Saccharomyces cerevisiae (strain ATCC 204508 / S288c) (Baker's yeast).